A 734-amino-acid polypeptide reads, in one-letter code: Phosphoribosylformylglycinamidine synthase subunit PurL (734 aa).

Histidine 49 is an active-site residue. ATP contacts are provided by tyrosine 52 and lysine 91. Glutamate 93 is a binding site for Mg(2+). Substrate is bound by residues 94 to 97 (SHNH) and arginine 116. The active-site Proton acceptor is histidine 95. Mg(2+) is bound at residue aspartate 117. Glutamine 240 is a substrate binding site. Mg(2+) is bound at residue aspartate 268. Residue 312 to 314 (ESQ) coordinates substrate. Residues aspartate 491 and glycine 528 each coordinate ATP. Asparagine 529 lines the Mg(2+) pocket. Serine 531 is a binding site for substrate.

The protein belongs to the FGAMS family. As to quaternary structure, monomer. Part of the FGAM synthase complex composed of 1 PurL, 1 PurQ and 2 PurS subunits.

It is found in the cytoplasm. The catalysed reaction is N(2)-formyl-N(1)-(5-phospho-beta-D-ribosyl)glycinamide + L-glutamine + ATP + H2O = 2-formamido-N(1)-(5-O-phospho-beta-D-ribosyl)acetamidine + L-glutamate + ADP + phosphate + H(+). Its pathway is purine metabolism; IMP biosynthesis via de novo pathway; 5-amino-1-(5-phospho-D-ribosyl)imidazole from N(2)-formyl-N(1)-(5-phospho-D-ribosyl)glycinamide: step 1/2. In terms of biological role, part of the phosphoribosylformylglycinamidine synthase complex involved in the purines biosynthetic pathway. Catalyzes the ATP-dependent conversion of formylglycinamide ribonucleotide (FGAR) and glutamine to yield formylglycinamidine ribonucleotide (FGAM) and glutamate. The FGAM synthase complex is composed of three subunits. PurQ produces an ammonia molecule by converting glutamine to glutamate. PurL transfers the ammonia molecule to FGAR to form FGAM in an ATP-dependent manner. PurS interacts with PurQ and PurL and is thought to assist in the transfer of the ammonia molecule from PurQ to PurL. This is Phosphoribosylformylglycinamidine synthase subunit PurL from Zymomonas mobilis subsp. mobilis (strain ATCC 31821 / ZM4 / CP4).